The following is a 169-amino-acid chain: Putative phosphoesterase SH1944 (169 aa).

Catalysis depends on His34, which acts as the Proton donor. 2 consecutive short sequence motifs (HXTX) follow at residues 34-37 (HITI) and 115-118 (HFTI). His115 acts as the Proton acceptor in catalysis.

This sequence belongs to the 2H phosphoesterase superfamily. YjcG family.

This Staphylococcus haemolyticus (strain JCSC1435) protein is Putative phosphoesterase SH1944.